The following is a 261-amino-acid chain: L-erythrulose-1-phosphate isomerase (261 aa).

Histidine 99 serves as the catalytic Electrophile. The Proton acceptor role is filled by glutamate 172.

This sequence belongs to the triosephosphate isomerase family.

It catalyses the reaction L-erythrulose 1-phosphate = D-erythrulose 4-phosphate. The protein operates within carbohydrate metabolism. Functionally, involved in catabolism of D-apiose. Catalyzes the isomerization of L-erythrulose 1-phosphate to D-erythrulose 4-phosphate. The sequence is that of L-erythrulose-1-phosphate isomerase from Rhizobium rhizogenes (strain K84 / ATCC BAA-868) (Agrobacterium radiobacter).